The primary structure comprises 96 residues: MKFLLLVLAALRFLTQVIPASGGGSKCVSDTQGYCRTYCHQGETALFMCNASRKCCASYSFLPKPDLPQLIGNHWQSRRRNTQRKDKKQQTTVTSS.

The first 22 residues, 1–22 (MKFLLLVLAALRFLTQVIPASG), serve as a signal peptide directing secretion. 3 disulfide bridges follow: Cys-27–Cys-55, Cys-35–Cys-49, and Cys-39–Cys-56. Positions 74–96 (HWQSRRRNTQRKDKKQQTTVTSS) are disordered. Over residues 76 to 87 (QSRRRNTQRKDK) the composition is skewed to basic residues.

It belongs to the beta-defensin family.

It localises to the secreted. In terms of biological role, has antibacterial activity. This is Beta-defensin 132 (DEFB132) from Hylobates lar (Lar gibbon).